We begin with the raw amino-acid sequence, 251 residues long: Triosephosphate isomerase (251 aa).

Residue 12–14 coordinates substrate; the sequence is NWK. The Electrophile role is filled by H98. E168 serves as the catalytic Proton acceptor. Residues G174, S213, and 234-235 contribute to the substrate site; that span reads GG.

It belongs to the triosephosphate isomerase family. As to quaternary structure, homodimer.

The protein resides in the cytoplasm. The catalysed reaction is D-glyceraldehyde 3-phosphate = dihydroxyacetone phosphate. It participates in carbohydrate biosynthesis; gluconeogenesis. Its pathway is carbohydrate degradation; glycolysis; D-glyceraldehyde 3-phosphate from glycerone phosphate: step 1/1. Involved in the gluconeogenesis. Catalyzes stereospecifically the conversion of dihydroxyacetone phosphate (DHAP) to D-glyceraldehyde-3-phosphate (G3P). The protein is Triosephosphate isomerase of Afipia carboxidovorans (strain ATCC 49405 / DSM 1227 / KCTC 32145 / OM5) (Oligotropha carboxidovorans).